We begin with the raw amino-acid sequence, 28 residues long: 50 kDa venom protease (28 aa).

The protein belongs to the venom metalloproteinase (M12B) family. Zn(2+) serves as cofactor. Expressed by the venom gland.

The protein localises to the secreted. The chain is 50 kDa venom protease from Proatheris superciliaris (Lowland swamp viper).